A 413-amino-acid polypeptide reads, in one-letter code: Zona pellucida-like domain-containing protein 1 (413 aa).

Residues 1–19 form the signal peptide; that stretch reads MEQICLIILLISKALSVGA. Q20 carries the pyrrolidone carboxylic acid modification. Residues 20-370 are Extracellular-facing; it reads QFNGYNCDAN…PVFRMNTVTS (351 aa). The ZP domain occupies 43–320; the sequence is YCGVQTITLK…PICGSRKKRD (278 aa). 2 cysteine pairs are disulfide-bonded: C44-C155 and C79-C104. N-linked (GlcNAc...) asparagine glycans are attached at residues N85, N121, N129, N164, N181, and N194. Disulfide bonds link C235-C296 and C255-C313. N351 carries N-linked (GlcNAc...) asparagine glycosylation. A helical transmembrane segment spans residues 371–391; it reads ALISGIIILGVMSLCFFILSL. At 392–413 the chain is on the cytoplasmic side; that stretch reads TLLKGKRAPPTILSGARNPAFN.

In terms of processing, proteolytically cleaved before the transmembrane segment to yield the secreted form found in the extracellular matrix of the cupula. N-glycosylated. Detected in the acellular cupulae of the vestibular organ, and also in support cells adjacent to the cupula (at protein level).

It localises to the cytoplasmic vesicle membrane. Its subcellular location is the secreted. It is found in the extracellular space. The protein resides in the extracellular matrix. In terms of biological role, glycoprotein which is a component of the gelatinous extracellular matrix in the cupulae of the vestibular organ. This chain is Zona pellucida-like domain-containing protein 1, found in Salmo salar (Atlantic salmon).